Here is a 197-residue protein sequence, read N- to C-terminus: Nucleoid occlusion factor SlmA (197 aa).

The HTH tetR-type domain maps to 6–66; that stretch reads NDRRTQILQA…GLIEFIEESL (61 aa). The H-T-H motif DNA-binding region spans 29-48; the sequence is TTAALAKQVGVSEAALYRHF.

This sequence belongs to the nucleoid occlusion factor SlmA family. As to quaternary structure, homodimer. Interacts with FtsZ.

Its subcellular location is the cytoplasm. The protein resides in the nucleoid. Required for nucleoid occlusion (NO) phenomenon, which prevents Z-ring formation and cell division over the nucleoid. Acts as a DNA-associated cell division inhibitor that binds simultaneously chromosomal DNA and FtsZ, and disrupts the assembly of FtsZ polymers. SlmA-DNA-binding sequences (SBS) are dispersed on non-Ter regions of the chromosome, preventing FtsZ polymerization at these regions. The chain is Nucleoid occlusion factor SlmA from Marinomonas sp. (strain MWYL1).